The chain runs to 140 residues: FK506-binding protein 2 (140 aa).

The N-terminal stretch at 1-19 is a signal peptide; it reads MKFTTGLSVLLFFVLQVFA. A PPIase FKBP-type domain is found at 43–132; sequence GDVVSVHYTG…IFETELVDIQ (90 aa).

The protein belongs to the FKBP-type PPIase family. FKBP2 subfamily.

It localises to the endoplasmic reticulum. The catalysed reaction is [protein]-peptidylproline (omega=180) = [protein]-peptidylproline (omega=0). Inhibited by both FK506 and rapamycin. Functionally, PPIases accelerate the folding of proteins. It catalyzes the cis-trans isomerization of proline imidic peptide bonds in oligopeptides. The polypeptide is FK506-binding protein 2 (FPR2) (Kluyveromyces lactis (strain ATCC 8585 / CBS 2359 / DSM 70799 / NBRC 1267 / NRRL Y-1140 / WM37) (Yeast)).